We begin with the raw amino-acid sequence, 365 residues long: Bifunctional chorismate mutase/prephenate dehydratase (365 aa).

The Chorismate mutase domain occupies 1–96 (MSEADQLKAL…SCLALEQPLR (96 aa)). Substrate contacts are provided by R11, R28, K39, and E57. The region spanning 97 to 272 (VAYLGPEGTF…NSTRFLIIGS (176 aa)) is the Prephenate dehydratase domain. Positions 284 to 361 (SIIVSMRNKP…VALKVLGSYP (78 aa)) constitute an ACT domain.

The protein resides in the cytoplasm. The catalysed reaction is chorismate = prephenate. The enzyme catalyses prephenate + H(+) = 3-phenylpyruvate + CO2 + H2O. Its pathway is amino-acid biosynthesis; L-phenylalanine biosynthesis; phenylpyruvate from prephenate: step 1/1. The protein operates within metabolic intermediate biosynthesis; prephenate biosynthesis; prephenate from chorismate: step 1/1. In terms of biological role, catalyzes the Claisen rearrangement of chorismate to prephenate and the decarboxylation/dehydration of prephenate to phenylpyruvate. The chain is Bifunctional chorismate mutase/prephenate dehydratase from Stutzerimonas stutzeri (Pseudomonas stutzeri).